We begin with the raw amino-acid sequence, 438 residues long: Serine hydroxymethyltransferase (438 aa).

(6S)-5,6,7,8-tetrahydrofolate is bound by residues Leu-119 and 123-125; that span reads GHL. Lys-228 is modified (N6-(pyridoxal phosphate)lysine). Position 370-372 (370-372) interacts with (6S)-5,6,7,8-tetrahydrofolate; the sequence is SPF.

The protein belongs to the SHMT family. As to quaternary structure, homodimer. It depends on pyridoxal 5'-phosphate as a cofactor.

The protein resides in the cytoplasm. The catalysed reaction is (6R)-5,10-methylene-5,6,7,8-tetrahydrofolate + glycine + H2O = (6S)-5,6,7,8-tetrahydrofolate + L-serine. The protein operates within one-carbon metabolism; tetrahydrofolate interconversion. It functions in the pathway amino-acid biosynthesis; glycine biosynthesis; glycine from L-serine: step 1/1. Catalyzes the reversible interconversion of serine and glycine with tetrahydrofolate (THF) serving as the one-carbon carrier. This reaction serves as the major source of one-carbon groups required for the biosynthesis of purines, thymidylate, methionine, and other important biomolecules. Also exhibits THF-independent aldolase activity toward beta-hydroxyamino acids, producing glycine and aldehydes, via a retro-aldol mechanism. The polypeptide is Serine hydroxymethyltransferase (Chlorobium chlorochromatii (strain CaD3)).